A 466-amino-acid polypeptide reads, in one-letter code: Cysteine--tRNA ligase 1 (466 aa).

Cys27 provides a ligand contact to Zn(2+). A 'HIGH' region motif is present at residues 29 to 39; that stretch reads PTVQSPPHIGH. Zn(2+) contacts are provided by Cys211, His236, and Glu240. The 'KMSKS' region motif lies at 267-271; that stretch reads KMSKS. Lys270 provides a ligand contact to ATP.

This sequence belongs to the class-I aminoacyl-tRNA synthetase family. Monomer. Requires Zn(2+) as cofactor.

The protein localises to the cytoplasm. It carries out the reaction tRNA(Cys) + L-cysteine + ATP = L-cysteinyl-tRNA(Cys) + AMP + diphosphate. In Tropheryma whipplei (strain TW08/27) (Whipple's bacillus), this protein is Cysteine--tRNA ligase 1.